Reading from the N-terminus, the 1147-residue chain is Nucleolar protein 8 (1147 aa).

In terms of domain architecture, RRM spans 8–89; sequence KRLFVGGLGQ…GTLQIQLAKE (82 aa). Lys225 is covalently cross-linked (Glycyl lysine isopeptide (Lys-Gly) (interchain with G-Cter in SUMO2)). Ser300 and Ser306 each carry phosphoserine. A Glycyl lysine isopeptide (Lys-Gly) (interchain with G-Cter in SUMO2) cross-link involves residue Lys316. Tyr362 bears the Phosphotyrosine mark. A phosphoserine mark is found at Ser364 and Ser365. At Thr367 the chain carries Phosphothreonine. The segment at 379–401 is disordered; that stretch reads KVKNSAESSQPERTVSKKSSFQK. Polar residues predominate over residues 383–400; that stretch reads SAESSQPERTVSKKSSFQ. The residue at position 416 (Ser416) is a Phosphoserine. 7 disordered regions span residues 427 to 452, 472 to 511, 592 to 659, 686 to 741, 766 to 888, 932 to 963, and 986 to 1017; these read KFVN…EEYK, AGSH…DLYN, MENG…PLKA, KALE…EDNQ, ANLD…NEDE, KHDH…AEKL, and SNTD…TLAC. Positions 441 to 450 are enriched in acidic residues; that stretch reads DSEESEEDEE. 2 stretches are compositionally biased toward polar residues: residues 592–610 and 629–650; these read MENG…TSCQ and TFEN…STNP. 2 stretches are compositionally biased toward basic and acidic residues: residues 700–714 and 732–741; these read SLEK…EDPQ and AKDKQAEDNQ. At Ser704 the chain carries Phosphoserine. At Thr777 the chain carries Phosphothreonine. Phosphoserine occurs at positions 783 and 787. The span at 799 to 809 shows a compositional bias: basic and acidic residues; it reads CPEKELMKESV. 5 positions are modified to phosphoserine: Ser819, Ser820, Ser825, Ser827, and Ser872. Over residues 857-883 the composition is skewed to basic and acidic residues; the sequence is SDERFRMDSRFLESDSEDEKKELNEDK. 2 coiled-coil regions span residues 868–898 and 937–963; these read LESD…KTLN and IYER…AEKL. The segment covering 994–1011 has biased composition (basic and acidic residues); sequence DVPRTEAGAREGTGKIRN. A Glycyl lysine isopeptide (Lys-Gly) (interchain with G-Cter in SUMO2) cross-link involves residue Lys1038. The disordered stretch occupies residues 1055–1086; it reads PNDPRFQDSSSEEEDIAEEADHSKPSPGEAVP. Phosphoserine is present on residues Ser1063, Ser1064, Ser1065, and Ser1080.

In terms of assembly, interacts with the GTP form of RRAGA, RRAGC and RRAGD. Interacts with NIP7. Interacts with DDX18; the interaction is RNA-dependent. Interacts with DDX47; the interaction is RNA-dependent. Post-translationally, phosphorylated.

The protein localises to the nucleus. It is found in the nucleolus. Functionally, plays an essential role in the survival of diffuse-type gastric cancer cells. Acts as a nucleolar anchoring protein for DDX47. May be involved in regulation of gene expression at the post-transcriptional level or in ribosome biogenesis in cancer cells. In Mus musculus (Mouse), this protein is Nucleolar protein 8.